Consider the following 349-residue polypeptide: GDSL esterase/lipase At2g19050 (349 aa).

A signal peptide spans 1-23 (MAEAIFKALLLVIATTAFATTEA). The active-site Nucleophile is Ser-38. A glycan (N-linked (GlcNAc...) asparagine) is linked at Asn-49. Active-site residues include Asp-316 and His-319.

Belongs to the 'GDSL' lipolytic enzyme family.

It is found in the secreted. The protein is GDSL esterase/lipase At2g19050 of Arabidopsis thaliana (Mouse-ear cress).